Consider the following 550-residue polypeptide: Glutamine--tRNA ligase (550 aa).

A 'HIGH' region motif is present at residues 34–44; the sequence is PEPNGYLHLGH. ATP contacts are provided by residues 35 to 37 and 41 to 47; these read EPN and HLGHAKS. L-glutamine is bound by residues D67 and Y212. ATP is bound by residues T231, 261-262, and 269-271; these read RL and LSK. The 'KMSKS' region signature appears at 268-272; it reads VLSKR.

It belongs to the class-I aminoacyl-tRNA synthetase family. As to quaternary structure, monomer.

The protein localises to the cytoplasm. The catalysed reaction is tRNA(Gln) + L-glutamine + ATP = L-glutaminyl-tRNA(Gln) + AMP + diphosphate. The sequence is that of Glutamine--tRNA ligase from Buchnera aphidicola subsp. Baizongia pistaciae (strain Bp).